The chain runs to 210 residues: Thioredoxin-like 3-1, chloroplastic (210 aa).

The 130-residue stretch at 81-210 (WRLKAFWSNI…EVRELINKFV (130 aa)) folds into the Thioredoxin domain. Catalysis depends on nucleophile residues Cys130 and Cys133. A disulfide bridge links Cys130 with Cys133.

It belongs to the thioredoxin family.

Its subcellular location is the plastid. It is found in the chloroplast stroma. Functionally, probable thiol-disulfide oxidoreductase that may participate in various redox reactions. This Arabidopsis thaliana (Mouse-ear cress) protein is Thioredoxin-like 3-1, chloroplastic (WCRKC1).